A 419-amino-acid chain; its full sequence is Serine--tRNA ligase (419 aa).

The segment at 45 to 66 (ADSLRAEQKAASKSVGGASPEE) is disordered. An L-serine-binding site is contributed by 226 to 228 (TSE). ATP-binding positions include 257 to 259 (RRE) and V273. E280 lines the L-serine pocket. ATP is bound at residue 344–347 (ELTS). Position 379 (T379) interacts with L-serine.

The protein belongs to the class-II aminoacyl-tRNA synthetase family. Type-1 seryl-tRNA synthetase subfamily. In terms of assembly, homodimer. The tRNA molecule binds across the dimer.

It localises to the cytoplasm. It carries out the reaction tRNA(Ser) + L-serine + ATP = L-seryl-tRNA(Ser) + AMP + diphosphate + H(+). It catalyses the reaction tRNA(Sec) + L-serine + ATP = L-seryl-tRNA(Sec) + AMP + diphosphate + H(+). Its pathway is aminoacyl-tRNA biosynthesis; selenocysteinyl-tRNA(Sec) biosynthesis; L-seryl-tRNA(Sec) from L-serine and tRNA(Sec): step 1/1. Its function is as follows. Catalyzes the attachment of serine to tRNA(Ser). Is also able to aminoacylate tRNA(Sec) with serine, to form the misacylated tRNA L-seryl-tRNA(Sec), which will be further converted into selenocysteinyl-tRNA(Sec). In Mycobacterium ulcerans (strain Agy99), this protein is Serine--tRNA ligase.